The chain runs to 204 residues: Proteasome subunit beta type-2-A (204 aa).

At Met1 the chain carries N-acetylmethionine.

This sequence belongs to the peptidase T1B family. Component of the 20S core complex of the 26S proteasome. The 26S proteasome is composed of a core protease (CP), known as the 20S proteasome, capped at one or both ends by the 19S regulatory particle (RP/PA700). The 20S proteasome core is composed of 28 subunits that are arranged in four stacked rings, resulting in a barrel-shaped structure. The two end rings are each formed by seven alpha subunits, and the two central rings are each formed by seven beta subunits. The catalytic chamber with the active sites is on the inside of the barrel.

It is found in the cytoplasm. Its subcellular location is the nucleus. In terms of biological role, non-catalytic component of the proteasome, a multicatalytic proteinase complex which is characterized by its ability to cleave peptides with Arg, Phe, Tyr, Leu, and Glu adjacent to the leaving group at neutral or slightly basic pH. The proteasome has an ATP-dependent proteolytic activity. This Arabidopsis thaliana (Mouse-ear cress) protein is Proteasome subunit beta type-2-A (PBD1).